A 1002-amino-acid chain; its full sequence is Hypoxia up-regulated protein 1 (1002 aa).

The first 23 residues, 1–23, serve as a signal peptide directing secretion; it reads MARAPRWMLGWLLLACCVPHTEP. Disordered stretches follow at residues 576 to 698 and 918 to 1002; these read LFGG…PKKQ and KPKP…NDEL. A compositionally biased stretch (basic and acidic residues) spans 643 to 675; that stretch reads PPKEESQKNEEGEKSEARDPKEDKETVNEEELS. The segment covering 933–947 has biased composition (polar residues); that stretch reads GKNATGTSESENTIP. Basic and acidic residues-rich tracts occupy residues 951-962 and 983-1002; these read GKQEEKPEDISP and SSKK…NDEL. Residues 999–1002 carry the Prevents secretion from ER motif; that stretch reads NDEL.

This sequence belongs to the heat shock protein 70 family.

The protein resides in the endoplasmic reticulum lumen. Functionally, has a pivotal role in cytoprotective cellular mechanisms triggered by oxygen deprivation. Promotes HSPA5/BiP-mediated ATP nucleotide exchange and thereby activates the unfolded protein response (UPR) pathway in the presence of endoplasmic reticulum stress. May play a role as a molecular chaperone and participate in protein folding. This chain is Hypoxia up-regulated protein 1 (HYOU1), found in Gallus gallus (Chicken).